Here is a 637-residue protein sequence, read N- to C-terminus: Chaperone protein DnaK (637 aa).

Thr198 is modified (phosphothreonine; by autocatalysis). Residues 601 to 615 show a composition bias toward low complexity; it reads AQQKAQAEQAGADAG. The tract at residues 601–637 is disordered; sequence AQQKAQAEQAGADAGEQPKQDDDVVDAEFEEVKEDKK. Acidic residues predominate over residues 623-637; sequence DVVDAEFEEVKEDKK.

It belongs to the heat shock protein 70 family.

Its function is as follows. Acts as a chaperone. In Vibrio atlanticus (strain LGP32) (Vibrio splendidus (strain Mel32)), this protein is Chaperone protein DnaK.